Consider the following 205-residue polypeptide: Probable thymidylate kinase (205 aa).

Position 7 to 14 (7 to 14 (GIDGAGKS)) interacts with ATP.

The protein belongs to the thymidylate kinase family.

The catalysed reaction is dTMP + ATP = dTDP + ADP. This Thermococcus kodakarensis (strain ATCC BAA-918 / JCM 12380 / KOD1) (Pyrococcus kodakaraensis (strain KOD1)) protein is Probable thymidylate kinase.